An 875-amino-acid chain; its full sequence is Alanine--tRNA ligase (875 aa).

Zn(2+)-binding residues include histidine 567, histidine 571, cysteine 669, and histidine 673.

This sequence belongs to the class-II aminoacyl-tRNA synthetase family. Zn(2+) serves as cofactor.

It localises to the cytoplasm. It catalyses the reaction tRNA(Ala) + L-alanine + ATP = L-alanyl-tRNA(Ala) + AMP + diphosphate. Functionally, catalyzes the attachment of alanine to tRNA(Ala) in a two-step reaction: alanine is first activated by ATP to form Ala-AMP and then transferred to the acceptor end of tRNA(Ala). Also edits incorrectly charged Ser-tRNA(Ala) and Gly-tRNA(Ala) via its editing domain. This is Alanine--tRNA ligase from Geobacter sulfurreducens (strain ATCC 51573 / DSM 12127 / PCA).